We begin with the raw amino-acid sequence, 984 residues long: Putative formate dehydrogenase SAB2186c (984 aa).

The 2Fe-2S ferredoxin-type domain occupies 3-79 (EHLVVTLDGK…PMTVNTVNND (77 aa)). 4 residues coordinate [2Fe-2S] cluster: cysteine 37, cysteine 48, cysteine 51, and cysteine 63. The 4Fe-4S His(Cys)3-ligated-type domain occupies 79–119 (DVKDAQKEALDRILEKHMLYCTVCDYNNGDCEIHNTMDAWG). Histidine 95, cysteine 99, cysteine 102, cysteine 109, cysteine 147, cysteine 150, cysteine 153, cysteine 157, cysteine 190, cysteine 193, cysteine 196, cysteine 200, cysteine 264, cysteine 267, cysteine 271, and cysteine 299 together coordinate [4Fe-4S] cluster. 2 consecutive 4Fe-4S ferredoxin-type domains span residues 138–165 (PFYR…VNET) and 181–211 (NDVP…VNME). The formate dehydrogenase stretch occupies residues 252–984 (MRKERIKKTK…YVFPGNQVDK (733 aa)). Positions 257–313 (IKKTKTVCTYCGVGCSFEVWTKDREILKVQPSHDSPANKIATCVKGKFSWGHINSDQ) constitute a 4Fe-4S Mo/W bis-MGD-type domain.

In the C-terminal section; belongs to the prokaryotic molybdopterin-containing oxidoreductase family. The cofactor is [2Fe-2S] cluster. [4Fe-4S] cluster serves as cofactor. Requires Mo-bis(molybdopterin guanine dinucleotide) as cofactor.

The enzyme catalyses formate + NAD(+) = CO2 + NADH. This is Putative formate dehydrogenase SAB2186c from Staphylococcus aureus (strain bovine RF122 / ET3-1).